The following is a 215-amino-acid chain: UPF0502 protein Shew_1617 (215 aa).

It belongs to the UPF0502 family.

This Shewanella loihica (strain ATCC BAA-1088 / PV-4) protein is UPF0502 protein Shew_1617.